Reading from the N-terminus, the 683-residue chain is Probable serine/threonine-protein kinase HAL5-like (683 aa).

Disordered stretches follow at residues M1–E90 and Y157–A200. Residues P36–S48 are compositionally biased toward low complexity. A compositionally biased stretch (gly residues) spans A50–G60. Polar residues predominate over residues S69–S85. The Protein kinase domain occupies G364–M670. Residues I370–V378 and K411 each bind ATP. The active-site Proton acceptor is D521.

The protein belongs to the protein kinase superfamily. CAMK Ser/Thr protein kinase family. NPR/HAL subfamily. HAL5 sub-subfamily.

It catalyses the reaction L-seryl-[protein] + ATP = O-phospho-L-seryl-[protein] + ADP + H(+). The catalysed reaction is L-threonyl-[protein] + ATP = O-phospho-L-threonyl-[protein] + ADP + H(+). The polypeptide is Probable serine/threonine-protein kinase HAL5-like (Eremothecium gossypii (strain ATCC 10895 / CBS 109.51 / FGSC 9923 / NRRL Y-1056) (Yeast)).